The following is a 152-amino-acid chain: Non-specific lipid transfer protein GPI-anchored 8 (152 aa).

The N-terminal stretch at 1-23 is a signal peptide; sequence MNITRILGVVTTVVILYSVQVTA. Disulfide bonds link Cys42–Cys56, Cys57–Cys98, and Cys70–Cys107. Asn108 carries an N-linked (GlcNAc...) asparagine glycan. Residue Ser124 is the site of GPI-anchor amidated serine attachment. The propeptide at 125–152 is removed in mature form; it reads GNSFSTKKNTALAITFFGFSFVFLGMII.

It belongs to the plant LTP family.

Its subcellular location is the cell membrane. Functionally, probable lipid transfer protein. This Arabidopsis thaliana (Mouse-ear cress) protein is Non-specific lipid transfer protein GPI-anchored 8.